A 1001-amino-acid polypeptide reads, in one-letter code: Sarcoplasmic/endoplasmic reticulum calcium ATPase 1 (1001 aa).

4 helical membrane-spanning segments follow: residues 49-69 (LWELVIEQFEDLLVRILLLAA), 90-110 (EPFVILLILIANAIVGVWQER), 254-273 (DEFGEQLSKVISLICVAVWL), and 296-313 (FKIAVALAVAAIPEGLPA). Ca(2+) contacts are provided by valine 304, alanine 305, isoleucine 307, and glutamate 309. Aspartate 351 serves as the catalytic 4-aspartylphosphate intermediate. Mg(2+) is bound by residues aspartate 351 and threonine 353. ATP is bound at residue threonine 353. Threonine 441 is subject to Phosphothreonine. Residues glutamate 442, arginine 489, lysine 515, and arginine 560 each contribute to the ATP site. At threonine 569 the chain carries Phosphothreonine. Serine 581 bears the Phosphoserine mark. ATP-binding residues include threonine 625, glycine 626, aspartate 627, arginine 678, and lysine 684. Aspartate 703 contributes to the Mg(2+) binding site. Asparagine 706 provides a ligand contact to ATP. The next 3 helical transmembrane spans lie at 758–777 (KQFIRYLISSNVGEVVCIFL), 788–808 (IPVQLLWVNLVTDGLPATALG), and 829–851 (ISGWLFFRYMAIGGYVGAATVGA). Ca(2+)-binding residues include asparagine 768, glutamate 771, asparagine 796, threonine 799, and aspartate 800. The tract at residues 788-808 (IPVQLLWVNLVTDGLPATALG) is interaction with PLN. Cysteine 876 and cysteine 888 form a disulfide bridge. The next 3 membrane-spanning stretches (helical) occupy residues 898–917 (TMALSVLVTIEMCNALNSLS), 931–949 (IWLLGSICLSMSLHFLILY), and 965–985 (TQWLMVLKISLPVIGLDEILK). Residue glutamate 908 participates in Ca(2+) binding. Positions 932–943 (WLLGSICLSMSL) are interaction with PLN.

It belongs to the cation transport ATPase (P-type) (TC 3.A.3) family. Type IIA subfamily. In terms of assembly, interacts with sarcolipin (SLN). Interacts with phospholamban (PLN). Interacts with myoregulin (MRLN). Interacts with DWORF. Interacts with VMP1. Mg(2+) is required as a cofactor. As to expression, skeletal muscle, fast twitch muscle (type II) fibers.

The protein localises to the endoplasmic reticulum membrane. It is found in the sarcoplasmic reticulum membrane. It carries out the reaction Ca(2+)(in) + ATP + H2O = Ca(2+)(out) + ADP + phosphate + H(+). With respect to regulation, inhibited by sarcolipin (SLN) and myoregulin (MRLN). Has also been shown to be reversibly inhibited by phospholamban (PLN) at low calcium concentrations in vitro. Dephosphorylated PLN decreases the apparent affinity of the ATPase for calcium and this inhibition is regulated by the phosphorylation of PLN in vitro. Enhanced by DWORF; DWORF increases activity by displacing sarcolipin (SLN), phospholamban (PLN) and myoregulin (MRLN). In terms of biological role, key regulator of striated muscle performance by acting as the major Ca(2+) ATPase responsible for the reuptake of cytosolic Ca(2+) into the sarcoplasmic reticulum. Catalyzes the hydrolysis of ATP coupled with the translocation of calcium from the cytosol to the sarcoplasmic reticulum lumen. Contributes to calcium sequestration involved in muscular excitation/contraction. The sequence is that of Sarcoplasmic/endoplasmic reticulum calcium ATPase 1 from Homo sapiens (Human).